Here is a 62-residue protein sequence, read N- to C-terminus: Large ribosomal subunit protein bL28 (62 aa).

It belongs to the bacterial ribosomal protein bL28 family.

This Parafrankia sp. (strain EAN1pec) protein is Large ribosomal subunit protein bL28.